The sequence spans 447 residues: Probable aspartic protease At2g35615 (447 aa).

Residues 1–20 (MATQILLCFFLFFSVTLSSS) form the signal peptide. N-linked (GlcNAc...) asparagine glycosylation is present at Asn25. The 355-residue stretch at 85 to 439 (FFMSITIGTP…DLETRTVSFQ (355 aa)) folds into the Peptidase A1 domain. Asp103 is a catalytic residue. Asn251 carries N-linked (GlcNAc...) asparagine glycosylation. Residue Asp326 is part of the active site.

This sequence belongs to the peptidase A1 family.

It localises to the secreted. The protein is Probable aspartic protease At2g35615 of Arabidopsis thaliana (Mouse-ear cress).